Here is a 366-residue protein sequence, read N- to C-terminus: Transcription factor IIIA (366 aa).

C2H2-type zinc fingers lie at residues 35–59, 65–89, 95–120, 127–151, 157–181, 184–210, 214–236, 243–268, and 274–298; these read YICS…LCKH, FPCK…SLTH, FTCD…NRFH, YVCH…QFSH, YECP…EKVH, YPCK…AECH, AVCD…QKTH, YLCP…QSFH, and FVCE…SVVH. S38 bears the Phosphoserine; by CK2 mark. Residues 299-310 show a composition bias toward basic and acidic residues; the sequence is DPEKRKLKEKCP. Positions 299 to 366 are disordered; that stretch reads DPEKRKLKEK…SLVLDKLTIQ (68 aa). At S336 the chain carries Phosphoserine; by CK2; in vitro.

In terms of processing, the N-terminus is blocked. In terms of tissue distribution, synthesized in oocytes and, in much lower levels, in somatic cells.

It localises to the nucleus. Its function is as follows. Involved in ribosomal large subunit biogenesis. Acts both as a positive transcription factor for 5S RNA genes, and as a specific RNA binding protein that complexes with 5S RNA in oocytes to form the 7S ribonucleoprotein storage particle. May play an essential role in the developmental change in 5S RNA gene expression. Interacts with the internal control region (ICR) of approximately 50 bases within the 5S RNA genes, is required for correct transcription of these genes by RNA polymerase III. Also binds the transcribed 5S RNA's. The polypeptide is Transcription factor IIIA (gtf3a) (Xenopus laevis (African clawed frog)).